Consider the following 536-residue polypeptide: Multifunctional cytochrome P450 monooxygenase af510 (536 aa).

The chain crosses the membrane as a helical span at residues 4–24 (ELSTLQLSCVAFVAFMAVLVF). Residues Asn-210 and Asn-293 are each glycosylated (N-linked (GlcNAc...) asparagine). Position 448 (Cys-448) interacts with heme.

It belongs to the cytochrome P450 family. Heme is required as a cofactor.

The protein localises to the membrane. The enzyme catalyses (+)-exo-beta-bergamotene + 2 reduced [NADPH--hemoprotein reductase] + 3 O2 = 5-dehydro-6-demethoxyfumagillol + 2 oxidized [NADPH--hemoprotein reductase] + 3 H2O + 2 H(+). Its pathway is secondary metabolite biosynthesis; terpenoid biosynthesis. Multifunctional cytochrome P450 monooxygenase; part of the gene cluster that mediates the biosynthesis of fumagillin, a meroterpenoid that has numerous biological activities including irreversible inhibition of human type 2 methionine aminopeptidase (METAP2). Within the pathway, the multifunctional cytochrome P450 monooxygenase af510 acts as a 2,4,6-trichlorophenol monooxygenase that first performs the C-H hydroxylation at the bridgehead C5 position to yield 5R-hydroxyl-beta-trans-bergamotene. Subsequently, a four electron oxidation initiated at C-9 coupled to cleavage of the cyclobutane C5-C8 bond of the bicyclo[3.1.1] core yields the epoxyketone intermediate 5-keto-cordycol. An additional epoxidation reaction also catalyzed by af510 then furnishes the characteristic bisepoxide ketone 5-keto-demethoxyfumagillol. The pathway begins with the conversion of farnesyl pyrophosphate (FPP) to beta-trans-bergamotene by the membrane-bound beta-trans-bergamotene synthase af520. The multifunctional cytochrome P450 monooxygenase af510 then converts beta-trans-bergamotene into 5-keto-demethoxyfumagillol via several oxydation steps. 5-keto-demethoxyfumagillol is then subjected to successive C-6 hydroxylation and O-methylation by the dioxygenase af480 and O-methyltransferase af390-400, respectively, to yield 5-keto-fumagillol, which is then stereoselectively reduced by the keto-reductase af490 to 5R-hydroxy-seco-sesquiterpene. The next step is the polyketide transferase af380-catalyzed transfer of a dodecapentaenoyl group synthesized by the polyketide synthase af370 onto 5R-hydroxy-seco-sesquiterpene which leads to the production of prefumagillin. Finally, oxidative cleavage by the monooxygenase af470 converts prefumagillin to fumagillin. The polypeptide is Multifunctional cytochrome P450 monooxygenase af510 (Aspergillus fumigatus (strain ATCC MYA-4609 / CBS 101355 / FGSC A1100 / Af293) (Neosartorya fumigata)).